The chain runs to 456 residues: Vitamin K-dependent protein C (456 aa).

Residues 1-20 (MWQLASLSLLLTICGTCSTA) form the signal peptide. Positions 21–42 (APPGSVFSSSESAHQVLRIRKR) are excised as a propeptide. Residues 47–88 (LEEIRAGSLERECMEEICDFEEAKEIFQNVDDTLAYWSKYVD) enclose the Gla domain. 9 positions are modified to 4-carboxyglutamate: Glu48, Glu49, Glu56, Glu58, Glu61, Glu62, Glu67, Glu68, and Glu71. Cys59 and Cys64 are oxidised to a cystine. Intrachain disulfides connect Cys92-Cys111, Cys101-Cys106, Cys105-Cys120, and Cys122-Cys131. 2 EGF-like domains span residues 97–132 (PEHA…RFCQ) and 136–176 (SYIN…LQCQ). Asp113 is modified ((3R)-3-hydroxyaspartate). An N-linked (GlcNAc...) asparagine glycan is attached at Asn139. 5 cysteine pairs are disulfide-bonded: Cys140/Cys151, Cys147/Cys160, Cys162/Cys175, Cys183/Cys318, and Cys237/Cys253. Asn202 is a glycosylation site (N-linked (GlcNAc...) asparagine). The 235-residue stretch at 211 to 445 (LVNGKVTRRG…YLDWIHSHIR (235 aa)) folds into the Peptidase S1 domain. His252 functions as the Charge relay system in the catalytic mechanism. An N-linked (GlcNAc...) asparagine glycan is attached at Asn289. Residue Asp298 is the Charge relay system of the active site. Asn350 carries N-linked (GlcNAc...) asparagine glycosylation. 2 disulfide bridges follow: Cys368–Cys382 and Cys393–Cys421. Ser397 (charge relay system) is an active-site residue.

It belongs to the peptidase S1 family. Synthesized as a single chain precursor, which is cleaved into a light chain and a heavy chain held together by a disulfide bond. The enzyme is then activated by thrombin, which cleaves a tetradecapeptide from the amino end of the heavy chain; this reaction, which occurs at the surface of endothelial cells, is strongly promoted by thrombomodulin. The vitamin K-dependent, enzymatic carboxylation of some Glu residues allows the modified protein to bind calcium. In terms of processing, the iron and 2-oxoglutarate dependent 3-hydroxylation of aspartate and asparagine is (R) stereospecific within EGF domains. Plasma; synthesized in the liver.

It localises to the secreted. It is found in the golgi apparatus. Its subcellular location is the endoplasmic reticulum. The enzyme catalyses Degradation of blood coagulation factors Va and VIIIa.. Its function is as follows. Protein C is a vitamin K-dependent serine protease that regulates blood coagulation by inactivating factors Va and VIIIa in the presence of calcium ions and phospholipids. Exerts a protective effect on the endothelial cell barrier function. This is Vitamin K-dependent protein C (PROC) from Canis lupus familiaris (Dog).